The sequence spans 214 residues: Probable nicotinate-nucleotide adenylyltransferase (214 aa).

Belongs to the NadD family.

The catalysed reaction is nicotinate beta-D-ribonucleotide + ATP + H(+) = deamido-NAD(+) + diphosphate. The protein operates within cofactor biosynthesis; NAD(+) biosynthesis; deamido-NAD(+) from nicotinate D-ribonucleotide: step 1/1. In terms of biological role, catalyzes the reversible adenylation of nicotinate mononucleotide (NaMN) to nicotinic acid adenine dinucleotide (NaAD). The protein is Probable nicotinate-nucleotide adenylyltransferase of Mycobacterium tuberculosis (strain ATCC 25177 / H37Ra).